We begin with the raw amino-acid sequence, 397 residues long: G2/mitotic-specific cyclin-B2 (397 aa).

Disordered regions lie at residues 1 to 20 (MALL…DTGV) and 64 to 97 (KVTH…PEDV). Thr8 bears the Phosphothreonine mark. Ser11 is subject to Phosphoserine. A compositionally biased stretch (polar residues) spans 64–74 (KVTHVNKQPKP). 3 positions are modified to phosphoserine: Ser77, Ser98, and Ser391.

This sequence belongs to the cyclin family. Cyclin AB subfamily. Interacts with the CDK1 protein kinase to form a serine/threonine kinase holoenzyme complex also known as maturation promoting factor (MPF). The cyclin subunit imparts substrate specificity to the complex.

Essential for the control of the cell cycle at the G2/M (mitosis) transition. The sequence is that of G2/mitotic-specific cyclin-B2 (CCNB2) from Mesocricetus auratus (Golden hamster).